Consider the following 129-residue polypeptide: MTLAVKCPILGFEETKNMEFSTIDEVFVRLKSLDGKDFSFVLINPYLIRPDYEFDIPTYYQELLSLTPESNMKIFNIVAIAKSIEESTVNFLAPVVINLDNNTMAQVILDTVNYPDFFQADQIANYIKK.

Belongs to the FliW family. In terms of assembly, interacts with translational regulator CsrA and flagellin(s).

It localises to the cytoplasm. Acts as an anti-CsrA protein, binds CsrA and prevents it from repressing translation of its target genes, one of which is flagellin. Binds to flagellin and participates in the assembly of the flagellum. The protein is Flagellar assembly factor FliW of Campylobacter jejuni subsp. doylei (strain ATCC BAA-1458 / RM4099 / 269.97).